Reading from the N-terminus, the 329-residue chain is Gibberellin 2-beta-dioxygenase 1 (329 aa).

The Fe2OG dioxygenase domain occupies 165–273; that stretch reads NTDSILRLNH…RVSMIYFAGP (109 aa). Fe cation contacts are provided by His-197, Asp-199, and His-254. Residue Arg-264 is part of the active site. Position 264 (Arg-264) interacts with 2-oxoglutarate.

It belongs to the iron/ascorbate-dependent oxidoreductase family. GA2OX subfamily. Fe(2+) serves as cofactor. In terms of tissue distribution, preferentially expressed in flowers, siliques, and upper stems. Not expressed in the apex.

The catalysed reaction is gibberellin A1 + 2-oxoglutarate + O2 = gibberellin A8 + succinate + CO2. The protein operates within plant hormone biosynthesis; gibberellin biosynthesis. Its function is as follows. Catalyzes the 2-beta-hydroxylation of several biologically active gibberellins, leading to the homeostatic regulation of their endogenous level. Catabolism of gibberellins (GAs) plays a central role in plant development. Converts GA9/GA20 to GA51/GA29 and GA4/GA1 to GA34/GA8. This is Gibberellin 2-beta-dioxygenase 1 (GA2OX1) from Arabidopsis thaliana (Mouse-ear cress).